The following is a 323-amino-acid chain: Protein translocase subunit SecF (323 aa).

Topologically, residues 1 to 22 (MAQEYTVEQLNHGRKVYDFMRW) are cytoplasmic. A helical transmembrane segment spans residues 23-43 (DYWAFGISGLLLIAAIVIMGV). The Periplasmic portion of the chain corresponds to 44–142 (RGFNWGLDFT…FVGPSVGADL (99 aa)). The helical transmembrane segment at 143-163 (AQTGAMALMAALLSILVYVGF) threads the bilayer. The Cytoplasmic portion of the chain corresponds to 164–170 (RFEWRLA). A helical transmembrane segment spans residues 171–191 (AGVVIALAHDVIITLGILSLF). Residues 192 to 196 (HIEID) are Periplasmic-facing. Residues 197–217 (LTIVASLMSVIGYSLNDSIVV) form a helical membrane-spanning segment. Residues 218–247 (SDRIRENFRKIRRGTPYEIFNVSLTQTLHR) lie on the Cytoplasmic side of the membrane. A helical transmembrane segment spans residues 248–270 (TLITSGTTLMVILMLYLFGGPVL). The Periplasmic portion of the chain corresponds to 271 to 280 (EGFSLTMLIG). The helical transmembrane segment at 281–301 (VSIGTASSIYVASALALKLGM) threads the bilayer. The Cytoplasmic segment spans residues 302–323 (KREHMLQQKVEKEGADQPSILP).

This sequence belongs to the SecD/SecF family. SecF subfamily. Forms a complex with SecD. Part of the essential Sec protein translocation apparatus which comprises SecA, SecYEG and auxiliary proteins SecDF-YajC and YidC.

The protein localises to the cell inner membrane. Its function is as follows. Part of the Sec protein translocase complex. Interacts with the SecYEG preprotein conducting channel. SecDF uses the proton motive force (PMF) to complete protein translocation after the ATP-dependent function of SecA. This chain is Protein translocase subunit SecF, found in Escherichia coli O157:H7.